Reading from the N-terminus, the 283-residue chain is MAGNFWQSSHYLQWILDKQDLLKERQKDLKFLSEEEYWKLQIFFTNVIQALGEHLKLRQQVIATATVYFKRFYARYSLKSIDPVLMAPTCVFLASKVEEFGVVSNTRLISAATSVLKTRFSYAFPKEFPYRMNHILECEFYLLELMDCCLIVYHPYRPLLQYVQDMGQEDMLLPLAWRIVNDTYRTDLCLLYPPFMIALACLHVACVVQQKDARQWFAELSVDMEKILEIIRVILKLYEQWKNFDERKEMASILSKMPKPKPPPNSDGEQGTNGSQSSGYSQS.

A Cyclin N-terminal domain is found at 46–144; sequence NVIQALGEHL…ILECEFYLLE (99 aa). Residues 252-283 form a disordered region; sequence SILSKMPKPKPPPNSDGEQGTNGSQSSGYSQS. The segment covering 267 to 283 has biased composition (polar residues); that stretch reads DGEQGTNGSQSSGYSQS.

This sequence belongs to the cyclin family. Cyclin C subfamily. As to quaternary structure, component of the Mediator complex. The cylin/CDK pair formed by ccnc/cdk8 also associates with the large subunit of RNA polymerase II.

It is found in the nucleus. In terms of biological role, component of the Mediator complex, a coactivator involved in regulated gene transcription of nearly all RNA polymerase II-dependent genes. Mediator functions as a bridge to convey information from gene-specific regulatory proteins to the basal RNA polymerase II transcription machinery. Mediator is recruited to promoters by direct interactions with regulatory proteins and serves as a scaffold for the assembly of a functional preinitiation complex with RNA polymerase II and the general transcription factors. Binds to and activates cyclin-dependent kinase cdk8 that phosphorylates the CTD (C-terminal domain) of the large subunit of RNA polymerase II (RNAp II), which may inhibit the formation of a transcription initiation complex. This is Cyclin-C (ccnc) from Xenopus laevis (African clawed frog).